Here is a 418-residue protein sequence, read N- to C-terminus: MNVKEKYELAKKEYEKWGIDVDKVLDELNKVKISIHCWQGDDVKGFEVVQNELSGGIQCNGNYPGAARNAEELRKDLDKALSLIPGKHKVNLHAIYLETNGEFVDRDEIKPEHFANWVKWAKENGLGLDFNPTIFSHPKSADGLTLSHPDKEIRDFWIRHSIASRKIGEYFGKELGQTCLTNIWIPDGYKDIPSDRLGPRRRLKESLDEIFKVQIDKKYNLDCVESKVFGIGAEAYTVGSNEFYLNYAAKNNIMSLMDTGHYHPTEVVSDKLSAMLLFDEKVALHVSRPVRWDSDHVVVYDDELKEIAKEIVRNDALDRVIIGLDFFDASINRIAAWTIGSRNMIKALLNAMLTPNDKLRELQEEGNFTERLALMEEFKTYPMGDIWNYYCEKNNVPVGESWIKEVKEYEKDVLSKRN.

Positions 261, 293, and 295 each coordinate Mn(2+).

The protein belongs to the rhamnose isomerase family. It depends on Mn(2+) as a cofactor.

The protein resides in the cytoplasm. It carries out the reaction L-rhamnopyranose = L-rhamnulose. It participates in carbohydrate degradation; L-rhamnose degradation; glycerone phosphate from L-rhamnose: step 1/3. In terms of biological role, catalyzes the interconversion of L-rhamnose and L-rhamnulose. The protein is L-rhamnose isomerase of Clostridium beijerinckii (strain ATCC 51743 / NCIMB 8052) (Clostridium acetobutylicum).